Consider the following 414-residue polypeptide: Cyclohex-1-ene-1-carbonyl-CoA dehydrogenase (414 aa).

The Proton acceptor role is filled by Asp-124. FAD-binding residues include Ala-157, Thr-158, Ser-164, and Thr-190. Ser-164 is a binding site for cyclohex-1-ene-1-carbonyl-CoA. Ser-164 serves as a coordination point for cyclohexa-1,5-diene-1-carbonyl-CoA. 3 residues coordinate cyclohex-1-ene-1-carbonyl-CoA: Lys-211, Arg-275, and Thr-396. Positions 211, 275, and 396 each coordinate cyclohexa-1,5-diene-1-carbonyl-CoA. 2 residues coordinate FAD: Thr-398 and Gln-400. Cyclohex-1-ene-1-carbonyl-CoA is bound at residue Arg-408. A cyclohexa-1,5-diene-1-carbonyl-CoA-binding site is contributed by Arg-408.

The protein belongs to the acyl-CoA dehydrogenase family. In terms of assembly, homotetramer. FAD is required as a cofactor.

It catalyses the reaction cyclohex-1-ene-1-carbonyl-CoA + oxidized [electron-transfer flavoprotein] + H(+) = cyclohexa-1,5-diene-1-carbonyl-CoA + reduced [electron-transfer flavoprotein]. In terms of biological role, mediates the conversion of cyclohex-1-ene-1-carbonyl-CoA (Ch1CoA) into (E)-2-cyclohex-1,5-diene-1-carbonyl-CoA in biosynthesis of cyclohexane-1-carboxylate, a by-product produced during fermentation of benzoate and crotonate to acetate. Also able to further convert (E)-2-cyclohex-1,5-diene-1-carbonyl-CoA to benzoyl-CoA. The chain is Cyclohex-1-ene-1-carbonyl-CoA dehydrogenase from Syntrophus aciditrophicus (strain SB).